We begin with the raw amino-acid sequence, 284 residues long: Bifunctional protein FolD (284 aa).

NADP(+)-binding positions include 165–167 and serine 190; that span reads GRS.

Belongs to the tetrahydrofolate dehydrogenase/cyclohydrolase family. In terms of assembly, homodimer.

It catalyses the reaction (6R)-5,10-methylene-5,6,7,8-tetrahydrofolate + NADP(+) = (6R)-5,10-methenyltetrahydrofolate + NADPH. It carries out the reaction (6R)-5,10-methenyltetrahydrofolate + H2O = (6R)-10-formyltetrahydrofolate + H(+). Its pathway is one-carbon metabolism; tetrahydrofolate interconversion. Functionally, catalyzes the oxidation of 5,10-methylenetetrahydrofolate to 5,10-methenyltetrahydrofolate and then the hydrolysis of 5,10-methenyltetrahydrofolate to 10-formyltetrahydrofolate. The sequence is that of Bifunctional protein FolD from Streptococcus gordonii (strain Challis / ATCC 35105 / BCRC 15272 / CH1 / DL1 / V288).